The sequence spans 162 residues: Allophycocyanin subunit beta (162 aa).

Asparagine 72 carries the N4-methylasparagine modification. Residue cysteine 82 participates in (2R,3E)-phycocyanobilin binding.

Belongs to the phycobiliprotein family. As to quaternary structure, heterohexamer of two alpha chains, one alpha-B chain and three beta chains. Contains one covalently linked phycocyanobilin chromophore. The chromophore is added by phycocyanobilin lyase CpcS 1.

It localises to the cellular thylakoid membrane. Functionally, light-harvesting photosynthetic bile pigment-protein from the phycobiliprotein complex. Allophycocyanin has a maximum absorption at approximately 650 to 653 nanometers. This chain is Allophycocyanin subunit beta (apcB), found in Nostoc sp. (strain PCC 7120 / SAG 25.82 / UTEX 2576).